Here is a 337-residue protein sequence, read N- to C-terminus: ADP-ribosylation factor GTPase-activating protein AGD12 (337 aa).

Residues 15–137 form the Arf-GAP domain; the sequence is KRRIRDLLTQ…EFLKPSLRIT (123 aa). Residues 30 to 53 form a C4-type zinc finger; that stretch reads CADCGAPDPKWASANIGVFICLKC. A C2 domain is found at 164 to 281; the sequence is TNSSSQQPQL…AMAFGDPEMF (118 aa). Ca(2+) contacts are provided by Asp-250, Ser-253, and Asp-256.

It depends on Ca(2+) as a cofactor. As to expression, expressed in roots, leaves, flowers and siliques. Low levels of expression in seeds and stems.

It is found in the golgi apparatus. The protein localises to the cell membrane. Its function is as follows. GTPase-activating protein (GAP) for ADP ribosylation factor (ARF). Binds phosphatidylinositol 3-monophosohate (PI-3-P) and anionic phospholipids. In Arabidopsis thaliana (Mouse-ear cress), this protein is ADP-ribosylation factor GTPase-activating protein AGD12 (AGD12).